The following is a 285-amino-acid chain: Sulfotransferase 2A2 (285 aa).

Residues K44, S45, G46, T47, N48, and W49 each contribute to the 3'-phosphoadenylyl sulfate site. The active-site Proton acceptor is the H99. 3'-phosphoadenylyl sulfate is bound by residues R121, S129, Y184, S218, R247, K248, and G249.

The protein belongs to the sulfotransferase 1 family. As to expression, detected in liver.

It localises to the cytoplasm. The catalysed reaction is an alcohol + 3'-phosphoadenylyl sulfate = an alkyl sulfate + adenosine 3',5'-bisphosphate + H(+). In terms of biological role, sulfotransferase that utilizes 3'-phospho-5'-adenylyl sulfate (PAPS) as sulfonate donor to catalyze the sulfate conjugation of a potential wide variety of acceptor molecules bearing a hydroxyl group. Sulfonation increases the water solubility of most compounds, and therefore their renal excretion, but it can also result in bioactivation to form active metabolites. This Rattus norvegicus (Rat) protein is Sulfotransferase 2A2.